The chain runs to 159 residues: Defense protein l(2)34Fc (159 aa).

The N-terminal stretch at 1 to 17 (MFRLLVLAACLAISVHA) is a signal peptide. The Reelin domain occupies 18-159 (YSDGAPKAAC…GRVTKDIDVE (142 aa)). Cys-27 and Cys-99 form a disulfide bridge.

This sequence belongs to the insect defense protein family.

The protein localises to the secreted. May have antimicrobial activity. A late response immune regulated gene that is negatively regulated by spz during the immune response. This Drosophila melanogaster (Fruit fly) protein is Defense protein l(2)34Fc (l(2)34Fc).